An 87-amino-acid polypeptide reads, in one-letter code: MTKRQFALLFVWHHDNQFVCNTDEYPFWHNIEYHARRYKCIVLYCVENDGSLQLPVCKNINLINYKKAYPHYYGNCVDSIVKRAGKN.

This is an uncharacterized protein from Autographa californica nuclear polyhedrosis virus (AcMNPV).